A 282-amino-acid chain; its full sequence is Adenosylcobinamide-GDP ribazoletransferase (282 aa).

6 helical membrane passes run 47 to 67, 72 to 92, 124 to 144, 167 to 187, 208 to 228, and 231 to 251; these read GVGI…QALL, FTPL…TGGF, AFGA…LAML, AALL…IWLL, GSLL…GLAL, and ISLI…GALF.

Belongs to the CobS family. Mg(2+) serves as cofactor.

It localises to the cell inner membrane. It catalyses the reaction alpha-ribazole + adenosylcob(III)inamide-GDP = adenosylcob(III)alamin + GMP + H(+). The enzyme catalyses alpha-ribazole 5'-phosphate + adenosylcob(III)inamide-GDP = adenosylcob(III)alamin 5'-phosphate + GMP + H(+). The protein operates within cofactor biosynthesis; adenosylcobalamin biosynthesis; adenosylcobalamin from cob(II)yrinate a,c-diamide: step 7/7. Functionally, joins adenosylcobinamide-GDP and alpha-ribazole to generate adenosylcobalamin (Ado-cobalamin). Also synthesizes adenosylcobalamin 5'-phosphate from adenosylcobinamide-GDP and alpha-ribazole 5'-phosphate. The polypeptide is Adenosylcobinamide-GDP ribazoletransferase (Polaromonas sp. (strain JS666 / ATCC BAA-500)).